Reading from the N-terminus, the 132-residue chain is Pre-histone-like nucleoprotein (132 aa).

Residues 2 to 23 (AILISPSNNTGWGLGTHKLFGG) constitute a propeptide that is removed on maturation. Residues 124–132 (RRKRRVRSK) carry the Nuclear localization signal motif.

This sequence belongs to the adenoviridae histone-like nucleoprotein family. In terms of assembly, interacts with the core-capsid bridging protein; this interaction bridges the virus core to the capsid. Interacts with host NPM1; this interaction might play a role in placing the pre-histone-like nucleoprotein on the viral DNA or regulating viral gene expression. Interacts with host HMGB1; this interaction inhibits host immune response. Post-translationally, cleaved near the N-terminus by the viral protease during virion maturation to form the mature protein.

The protein resides in the virion. It localises to the host nucleus. Its subcellular location is the host nucleolus. Plays a role in the inhibition of host immune response within the nucleus. Interacts with cellular nucleosomes and immobilizes the host immune danger signal HMGB1 on chromatin. In turn, prevents HMGB1 release out of the cell and thus decreases inflammation. Also plays a role in the wrapping and condensation of the viral DNA. May also promote viral genome import into the nucleus. In Canine adenovirus serotype 1 (strain CLL) (CAdV-1), this protein is Pre-histone-like nucleoprotein.